A 162-amino-acid chain; its full sequence is Dihydrofolate reductase (162 aa).

The DHFR domain maps to 3-161 (KITLIAACAE…TRYAFVHYLR (159 aa)). 7–9 (IAA) lines the substrate pocket. NADP(+) is bound by residues 8–9 (AA) and 16–21 (IGAGNA). Aspartate 29 is a binding site for substrate. An NADP(+)-binding site is contributed by 45–48 (GRKT). Arginine 60 is a substrate binding site. NADP(+) contacts are provided by residues 65–68 (ISRQ) and 98–103 (MGGAQI). A substrate-binding site is contributed by threonine 117.

The protein belongs to the dihydrofolate reductase family.

The enzyme catalyses (6S)-5,6,7,8-tetrahydrofolate + NADP(+) = 7,8-dihydrofolate + NADPH + H(+). Its pathway is cofactor biosynthesis; tetrahydrofolate biosynthesis; 5,6,7,8-tetrahydrofolate from 7,8-dihydrofolate: step 1/1. Key enzyme in folate metabolism. Catalyzes an essential reaction for de novo glycine and purine synthesis, and for DNA precursor synthesis. The chain is Dihydrofolate reductase (folA) from Neisseria meningitidis serogroup B (strain ATCC BAA-335 / MC58).